We begin with the raw amino-acid sequence, 313 residues long: Intelectin-1a (313 aa).

The first 18 residues, 1-18, serve as a signal peptide directing secretion; sequence MTQLGFLLFIMVATRGCS. Residues 32–251 form the Fibrinogen C-terminal domain; it reads SFFSSLPRSC…NNERAASALC (220 aa). A disulfide bridge links Cys41 with Cys70. Residues His86, Glu87, Asn89, Gly92, Gly97, Asp98, and Asp133 each coordinate Ca(2+). Cystine bridges form between Cys94-Cys280, Cys199-Cys259, and Cys251-Cys265. Positions 260, 262, 274, and 282 each coordinate Ca(2+). A carbohydrate-binding positions include 262–263 and Glu274; that span reads EH. Ser298 carries the GPI-anchor amidated serine lipid modification. The propeptide occupies 299–313; the sequence is SSRKITEAAVLLFYR.

As to quaternary structure, monomer. May interact with LTF. As to expression, expressed in small intestinal Paneth cells in uninfected mice. Expression also detected in various other tissues including stomach, kidney, ovary and brain.

The protein localises to the cell membrane. The protein resides in the secreted. In terms of biological role, lectin that specifically recognizes microbial carbohydrate chains in a calcium-dependent manner. Binds to microbial glycans that contain a terminal acyclic 1,2-diol moiety, including beta-linked D-galactofuranose (beta-Galf), D-phosphoglycerol-modified glycans, D-glycero-D-talo-oct-2-ulosonic acid (KO) and 3-deoxy-D-manno-oct-2-ulosonic acid (KDO). Binds to glycans from Gram-positive and Gram-negative bacteria, including K.pneumoniae, S.pneumoniae, Y.pestis, P.mirabilis and P.vulgaris. Does not bind mammalian glycans. Probably plays a role in the defense system against microorganisms. May function as adipokine that has no effect on basal glucose uptake but enhances insulin-stimulated glucose uptake in adipocytes. Increases AKT phosphorylation in the absence and presence of insulin. May interact with lactoferrin/LTF and increase its uptake, and may thereby play a role in iron absorption. In Mus musculus (Mouse), this protein is Intelectin-1a (Itln1).